Reading from the N-terminus, the 221-residue chain is GTP-binding nuclear protein Ran-A1 (221 aa).

The Small GTPase Ran-type domain maps to 10-174 (DYPSFKLVIV…LYLARKLAGD (165 aa)). Position 21–28 (21–28 (DGGTGKTT)) interacts with GTP. The switch-I stretch occupies residues 40–48 (KKYEPTIGV). GTP-binding positions include G71, 125-128 (NKVD), and 153-155 (SAK). Residues 71 to 87 (GQEKFGGLRDGYYIHGQ) form a switch-II region. Low complexity predominate over residues 199 to 208 (QHEAELAAAA). Residues 199–221 (QHEAELAAAASQPLPDDDDETFD) are disordered.

It belongs to the small GTPase superfamily. Ran family. As to quaternary structure, found in a nuclear export complex with RanGTP, exportin and pre-miRNA.

It localises to the nucleus. In terms of biological role, GTP-binding protein involved in nucleocytoplasmic transport. Required for the import of protein into the nucleus and also for RNA export. Involved in chromatin condensation and control of cell cycle. The polypeptide is GTP-binding nuclear protein Ran-A1 (RAN-A1) (Nicotiana tabacum (Common tobacco)).